A 423-amino-acid chain; its full sequence is AP-1 complex subunit mu-2 (423 aa).

The 254-residue stretch at 168 to 421 (KNEVFIDVIE…ITQSGDYQLR (254 aa)) folds into the MHD domain.

The protein belongs to the adaptor complexes medium subunit family. In terms of assembly, adaptor protein complex 1 (AP-1) is a heterotetramer composed of two large adaptins (gamma-type subunit AP1G1 and beta-type subunit AP1B1), a medium adaptin (mu-type subunit AP1M1 or AP1M2) and a small adaptin (sigma-type subunit AP1S1 or AP1S2 or AP1S3). Interacts with P2X4. Phosphorylation of membrane-bound AP1M1/AP1M2 increases its affinity for sorting signals.

The protein localises to the golgi apparatus. It is found in the cytoplasmic vesicle. It localises to the clathrin-coated vesicle membrane. In terms of biological role, subunit of clathrin-associated adaptor protein complex 1 that plays a role in protein sorting in the trans-Golgi network (TGN) and endosomes. The AP complexes mediate the recruitment of clathrin to membranes and the recognition of sorting signals within the cytosolic tails of transmembrane cargo molecules. This chain is AP-1 complex subunit mu-2 (AP1M2), found in Homo sapiens (Human).